The chain runs to 700 residues: Elongation factor G (700 aa).

Residues 10-286 (TKVRNIGIMA…AVIDYLPSPL (277 aa)) enclose the tr-type G domain. GTP is bound by residues 19–26 (AHIDAGKT), 83–87 (DTPGH), and 137–140 (NKMD).

This sequence belongs to the TRAFAC class translation factor GTPase superfamily. Classic translation factor GTPase family. EF-G/EF-2 subfamily.

The protein resides in the cytoplasm. Functionally, catalyzes the GTP-dependent ribosomal translocation step during translation elongation. During this step, the ribosome changes from the pre-translocational (PRE) to the post-translocational (POST) state as the newly formed A-site-bound peptidyl-tRNA and P-site-bound deacylated tRNA move to the P and E sites, respectively. Catalyzes the coordinated movement of the two tRNA molecules, the mRNA and conformational changes in the ribosome. The sequence is that of Elongation factor G from Kineococcus radiotolerans (strain ATCC BAA-149 / DSM 14245 / SRS30216).